The following is a 473-amino-acid chain: Photosystem II CP43 reaction center protein (473 aa).

A propeptide spanning residues 1–14 (MKTLYSLRRFYHVE) is cleaved from the precursor. An N-acetylthreonine modification is found at threonine 15. Residue threonine 15 is modified to Phosphothreonine. The next 5 helical transmembrane spans lie at 69-93 (LFEVAHFVPEKPMYEQGLILLPHLA), 134-155 (LLGPETLEESFPFFGYVWKDRN), 178-200 (KALYFGGVYDTWAPGGGDVRKIT), 255-275 (KPFAWARRALVWSGEAYLSYS), and 291-312 (WFNNTAYPSEFYGPTGPEASQA). Residue glutamate 367 coordinates [CaMn4O5] cluster. The helical transmembrane segment at 447–471 (RARAAAAGFEKGIDRDFEPVLSMTP) threads the bilayer.

The protein belongs to the PsbB/PsbC family. PsbC subfamily. As to quaternary structure, PSII is composed of 1 copy each of membrane proteins PsbA, PsbB, PsbC, PsbD, PsbE, PsbF, PsbH, PsbI, PsbJ, PsbK, PsbL, PsbM, PsbT, PsbX, PsbY, PsbZ, Psb30/Ycf12, at least 3 peripheral proteins of the oxygen-evolving complex and a large number of cofactors. It forms dimeric complexes. Binds multiple chlorophylls and provides some of the ligands for the Ca-4Mn-5O cluster of the oxygen-evolving complex. It may also provide a ligand for a Cl- that is required for oxygen evolution. PSII binds additional chlorophylls, carotenoids and specific lipids. serves as cofactor.

It is found in the plastid. Its subcellular location is the chloroplast thylakoid membrane. In terms of biological role, one of the components of the core complex of photosystem II (PSII). It binds chlorophyll and helps catalyze the primary light-induced photochemical processes of PSII. PSII is a light-driven water:plastoquinone oxidoreductase, using light energy to abstract electrons from H(2)O, generating O(2) and a proton gradient subsequently used for ATP formation. The sequence is that of Photosystem II CP43 reaction center protein from Crucihimalaya wallichii (Rock-cress).